A 453-amino-acid chain; its full sequence is MDDITQNLESVEKNPDIGMGRGVYISTYGCQMNVNDTERMYALLEMQNFVPVTDPKKASLIIINSCSVREKPVHKVYSEVGTYKYMKRKNPELKIGVGGCVGQQEKENLMKTQPMIDFVFGTDQIDSLPQLVAKSFAGERRLVNSRFEHRSPYHIETLVRNPGVATYVNITKGCDNFCTFCVVPYTRGREKSRPVQHILTDIRHLVKRGVKEVTLLGQNVNSYQGDEGIDFADLLAKVAKETDVERIRYTTSHPKDFNQKLVDVMAEHSNKIMEYIHLPFQAGSTKVLERMNRNYTREEYLERIAMIQKGLPNVCFSTDIIVGFPGETEEDFQDTLNMVTEVGFETIFAFSYSPRPFTKAAKFEDQLPEDVKNERLNRLFDVHEAMAFERVKRYEGTTMKVLVENVDRDHGKMQGRSTGNKLVHFLGTADLIGKTVDVKITKAFPAVFRGEMI.

The region spanning 21-137 is the MTTase N-terminal domain; the sequence is RGVYISTYGC…LPQLVAKSFA (117 aa). Residues Cys-30, Cys-66, Cys-100, Cys-174, Cys-178, and Cys-181 each coordinate [4Fe-4S] cluster. Residues 160 to 389 enclose the Radical SAM core domain; it reads RNPGVATYVN…FDVHEAMAFE (230 aa). A TRAM domain is found at 392–453; it reads KRYEGTTMKV…FPAVFRGEMI (62 aa).

This sequence belongs to the methylthiotransferase family. MiaB subfamily. Monomer. Requires [4Fe-4S] cluster as cofactor.

The protein resides in the cytoplasm. It carries out the reaction N(6)-dimethylallyladenosine(37) in tRNA + (sulfur carrier)-SH + AH2 + 2 S-adenosyl-L-methionine = 2-methylsulfanyl-N(6)-dimethylallyladenosine(37) in tRNA + (sulfur carrier)-H + 5'-deoxyadenosine + L-methionine + A + S-adenosyl-L-homocysteine + 2 H(+). Catalyzes the methylthiolation of N6-(dimethylallyl)adenosine (i(6)A), leading to the formation of 2-methylthio-N6-(dimethylallyl)adenosine (ms(2)i(6)A) at position 37 in tRNAs that read codons beginning with uridine. This chain is tRNA-2-methylthio-N(6)-dimethylallyladenosine synthase, found in Bdellovibrio bacteriovorus (strain ATCC 15356 / DSM 50701 / NCIMB 9529 / HD100).